Reading from the N-terminus, the 242-residue chain is MLQKTVGIVLHVLKYNDTSNIVEMYTELSGRASFLVTVPRSKKATVKSVLFQPLALIEFEADYRPNTSLFRIKEAKSFSPFTSIPYDPFKSAIALFLAEFLYRAIREEAENRPLFAYLQHSILWLDTCKISFANFHLVFLMRLSRFLGLYPNLDDYHAGDYFDMLNATFTSVRPQLHSSYIQPDEAGRLLQLMRMNYETMHLFGMNRTERARCLAIINEYYRLHLPDFPILKSLDVLKELFD.

The protein belongs to the RecO family.

Functionally, involved in DNA repair and RecF pathway recombination. In Bacteroides fragilis (strain ATCC 25285 / DSM 2151 / CCUG 4856 / JCM 11019 / LMG 10263 / NCTC 9343 / Onslow / VPI 2553 / EN-2), this protein is DNA repair protein RecO.